Reading from the N-terminus, the 70-residue chain is Movement protein TGBp3 (70 aa).

Residues 1-4 (MFPR) are Lumenal-facing. Residues 5-25 (SGLGLAVAAAVVAYLVLLLAQ) traverse the membrane as a helical segment. Residues 26–70 (QLYMSNSSQCTIVITGESVSVVGCVYSEAFIELVKGLKPYYHPLG) are Cytoplasmic-facing.

The protein belongs to the Tymovirales TGBp3 protein family.

The protein localises to the host endoplasmic reticulum membrane. Its function is as follows. Plays a role in viral cell-to-cell propagation, by facilitating genome transport to neighboring plant cells through plasmosdesmata. May induce the formation of granular vesicles derived from the Endoplasmic reticulum, which align on actin filaments. This chain is Movement protein TGBp3, found in Crataegus (hawthorn).